A 129-amino-acid polypeptide reads, in one-letter code: Large ribosomal subunit protein bL17 (129 aa).

This sequence belongs to the bacterial ribosomal protein bL17 family. Part of the 50S ribosomal subunit. Contacts protein L32.

This chain is Large ribosomal subunit protein bL17, found in Hahella chejuensis (strain KCTC 2396).